Reading from the N-terminus, the 145-residue chain is LIM domain only protein 3 (145 aa).

2 consecutive LIM zinc-binding domains span residues 11 to 73 and 75 to 137; these read KGCA…LFGT and GNCA…GLMK.

This chain is LIM domain only protein 3 (Lmo3), found in Rattus norvegicus (Rat).